The chain runs to 459 residues: MEGRANSPGEPRAWPTRSVLCRGCVEPLVFLANFALVLQGPVTTQYLWHRFSADLGYNGTRHRDSCSNHSVDPIAQEVETLTSHWTLYMNVGGFLVGLFSSTLLGAWSDCVGRRPLLVLASLGLLLQTVLSIFVVQLHLHIGYLVLGRILCALLGDFSGLLAASFASVADVSSSRTRTIRMALLEACIGVAGMLASFIGGFLLQEQVYVNPFWLALAVLTVMTLYAAFCFGETVKERTPTRLFTLRHHRSVIQLYVTQAPEKSRKHLALYSLAIFVMITVHLGAQDILTLYELSAPLCWDSRLISYGSAAQQLPYLTSLLGLRLLQYCLADTWVAEIGLVFNILGMMVFAFATITPLMFTGYGLLFLSLVVTPIIRAKLSRLVRQSEQGALFSALACVNGLAMLMASGIFNSLYPATLNLMKGFPFLLAAGLLFIPAILMGILERDNHCPEFQEFSQSP.

Met-1 is modified (N-acetylmethionine). Residues 1–25 lie on the Cytoplasmic side of the membrane; that stretch reads MEGRANSPGEPRAWPTRSVLCRGCV. Residues 26–44 form a helical membrane-spanning segment; that stretch reads EPLVFLANFALVLQGPVTT. The Extracellular portion of the chain corresponds to 45-82; sequence QYLWHRFSADLGYNGTRHRDSCSNHSVDPIAQEVETLT. N-linked (GlcNAc...) asparagine glycosylation is found at Asn-58 and Asn-68. Cysteines 66 and 298 form a disulfide. A helical membrane pass occupies residues 83-108; that stretch reads SHWTLYMNVGGFLVGLFSSTLLGAWS. At 109 to 112 the chain is on the cytoplasmic side; sequence DCVG. Residues 113–135 form a helical membrane-spanning segment; that stretch reads RRPLLVLASLGLLLQTVLSIFVV. At 136–140 the chain is on the extracellular side; that stretch reads QLHLH. Residues 141 to 154 form a helical membrane-spanning segment; that stretch reads IGYLVLGRILCALL. The Cytoplasmic segment spans residues 155-177; the sequence is GDFSGLLAASFASVADVSSSRTR. Asp-156 and Glu-185 together coordinate H(+). The chain crosses the membrane as a helical span at residues 178 to 203; the sequence is TIRMALLEACIGVAGMLASFIGGFLL. At 204-208 the chain is on the extracellular side; it reads QEQVY. The chain crosses the membrane as a helical span at residues 209–227; it reads VNPFWLALAVLTVMTLYAA. Topologically, residues 228-266 are cytoplasmic; that stretch reads FCFGETVKERTPTRLFTLRHHRSVIQLYVTQAPEKSRKH. Residues 267 to 289 form a helical membrane-spanning segment; that stretch reads LALYSLAIFVMITVHLGAQDILT. His-281 contributes to the H(+) binding site. The Extracellular segment spans residues 290–302; sequence LYELSAPLCWDSR. Residues 303–325 form a helical membrane-spanning segment; sequence LISYGSAAQQLPYLTSLLGLRLL. At 326-331 the chain is on the cytoplasmic side; the sequence is QYCLAD. A helical transmembrane segment spans residues 332-351; sequence TWVAEIGLVFNILGMMVFAF. Topologically, residues 352–355 are extracellular; sequence ATIT. Residues 356–376 traverse the membrane as a helical segment; the sequence is PLMFTGYGLLFLSLVVTPIIR. Topologically, residues 377-388 are cytoplasmic; that stretch reads AKLSRLVRQSEQ. A helical transmembrane segment spans residues 389-414; the sequence is GALFSALACVNGLAMLMASGIFNSLY. Residues 415 to 422 lie on the Extracellular side of the membrane; it reads PATLNLMK. The chain crosses the membrane as a helical span at residues 423–441; the sequence is GFPFLLAAGLLFIPAILMG. Residues 442–459 are Cytoplasmic-facing; the sequence is ILERDNHCPEFQEFSQSP. Ser-458 is subject to Phosphoserine.

Belongs to the major facilitator superfamily. SLC46A family. As to quaternary structure, monomer. As to expression, expressed in retina and retinal pigment epithelium.

The protein resides in the cell membrane. It is found in the apical cell membrane. The protein localises to the basolateral cell membrane. Its subcellular location is the endosome membrane. It localises to the cytoplasm. The enzyme catalyses folate(in) + H(+)(in) = folate(out) + H(+)(out). It carries out the reaction (6S)-5-methyl-5,6,7,8-tetrahydrofolate(in) + H(+)(in) = (6S)-5-methyl-5,6,7,8-tetrahydrofolate(out) + H(+)(out). It catalyses the reaction methotrexate(in) + H(+)(in) = methotrexate(out) + H(+)(out). The catalysed reaction is pemetrexed(in) + H(+)(in) = pemetrexed(out) + H(+)(out). Proton-coupled folate symporter that mediates folate absorption using an H(+) gradient as a driving force. Involved in the intestinal absorption of folates at the brush-border membrane of the proximal jejunum, and the transport from blood to cerebrospinal fluid across the choroid plexus. Functions at acidic pH via alternate outward- and inward-open conformation states. Protonation of residues in the outward open state primes the protein for transport. Binding of folate promotes breaking of salt bridge network and subsequent closure of the extracellular gate, leading to the inward-open state and release of protons and folate. Also able to transport antifolate drugs, such as methotrexate and pemetrexed. Involved in FOLR1-mediated endocytosis by serving as a route of export of folates from acidified endosomes. Also acts as a lower-affinity, pH-independent heme carrier protein and constitutes the main importer of heme in the intestine. Imports heme in the retina and retinal pigment epithelium, in neurons of the hippocampus, in hepatocytes and in the renal epithelial cells. Hence, participates in the trafficking of heme and increases intracellular iron content. The polypeptide is Proton-coupled folate transporter (Bos taurus (Bovine)).